We begin with the raw amino-acid sequence, 157 residues long: NudC domain-containing protein 2 (157 aa).

Ser-2 carries the post-translational modification N-acetylserine. Residues 14-104 (CGTPWGQWYQ…DAANCWTSLL (91 aa)) enclose the CS domain. Residues 134 to 157 (FDFSGAEISGNYTKGGPDFSNLEK) are disordered. Residue Ser-142 is modified to Phosphoserine. Tyr-145 carries the phosphotyrosine modification.

Interacts with LIS1.

The protein localises to the chromosome. It is found in the centromere. The protein resides in the kinetochore. It localises to the cytoplasm. Its subcellular location is the cytoskeleton. The protein localises to the microtubule organizing center. It is found in the centrosome. The protein resides in the spindle pole. May regulate the LIS1/dynein pathway by stabilizing LIS1 with Hsp90 chaperone. This Mus musculus (Mouse) protein is NudC domain-containing protein 2 (Nudcd2).